The chain runs to 152 residues: ESAT-6 secretion machinery protein EssA (152 aa).

Topologically, residues 1–114 (MLMNSVIALT…PYIQNKQEKK (114 aa)) are cytoplasmic. The chain crosses the membrane as a helical span at residues 115–135 (IFPYILMSVGAFLTLGFVIFS). The Extracellular segment spans residues 136 to 152 (IHKGRRTKNESARKSNI).

This sequence belongs to the EssA family.

The protein localises to the cell membrane. In terms of biological role, component of the ESAT-6 secretion system (Ess). Required for the secretion of EsxA and EsxB. The chain is ESAT-6 secretion machinery protein EssA from Staphylococcus aureus (strain Mu50 / ATCC 700699).